The sequence spans 41 residues: Photosystem I reaction center subunit IX (41 aa).

The helical transmembrane segment at 7–27 (YLSTAPVVAAAWFTFTAGLLI) threads the bilayer.

Belongs to the PsaJ family.

It localises to the plastid. Its subcellular location is the chloroplast thylakoid membrane. Functionally, may help in the organization of the PsaE and PsaF subunits. The polypeptide is Photosystem I reaction center subunit IX (Oltmannsiellopsis viridis (Marine flagellate)).